The following is a 1088-amino-acid chain: Pathogenesis-related homeodomain protein (1088 aa).

8 consecutive repeat copies span residues 140 to 152, 173 to 199, 205 to 239, 240 to 274, 283 to 295, 316 to 342, 348 to 382, and 383 to 417. Residues 140–295 are 2 X 13 AA repeats; sequence INMGQKETMP…EQKETIPEQV (156 aa). The segment at 173 to 342 is 2 X 27 AA approximate repeats; that stretch reads NSYQSGLPPE…HAQFGHQSDD (170 aa). The segment at 205 to 274 is 2 X 35 AA approximate tandem repeats (type C); that stretch reads GLVELVIGQK…SRGRPRKVQN (70 aa). Residues 220–282 form a disordered region; it reads PSQLVETGKR…QNSPTSFLEN (63 aa). 2 consecutive DNA-binding regions (a.T hook) follow at residues 226–236 and 261–271; these read TGKRGRGRPRK and TGKRSRGRPRK. Positions 272-282 are enriched in polar residues; that stretch reads VQNSPTSFLEN. A compositionally biased stretch (polar residues) spans 303–320; that stretch reads SLTIPTDNQSRTYNSDQS. Disordered regions lie at residues 303 to 343 and 363 to 484; these read SLTI…SDDT and PSQL…RMEE. The 2 X 35 AA approximate tandem repeats (type C) stretch occupies residues 348–417; the sequence is GFKELVIGQE…SRGRPRKVQD (70 aa). 2 consecutive DNA-binding regions (a.T hook) follow at residues 369–379 and 404–414; these read AGKRGRGRPRK and TGKRSRGRPRK. The PHD-type zinc finger occupies 578–635; the sequence is DIFCAKCGSKDVTLSNDIILCDGACDRGFHQFCLDPPLLKEYIPPDDEGWLCPGCECK. Disordered stretches follow at residues 667–810 and 851–901; these read AASG…PLYP and EEYG…ARES. A 4-1 repeat occupies 678–693; it reads GLPSDDSEDDDYDPGG. Positions 678–744 are 2 X 16 AA Asp/Glu-rich (acidic) repeats; that stretch reads GLPSDDSEDD…SEDDEYDPSG (67 aa). Positions 705-718 are enriched in acidic residues; that stretch reads SSTDESDYQSESDD. A 4-2 repeat occupies 729–744; that stretch reads GLPSDDSEDDEYDPSG. Composition is skewed to basic and acidic residues over residues 788–802 and 874–901; these read DHVRNNEEGCGHPEQ and NNSDKEATAMERGRESGDLELDQKARES. The segment at residues 935–994 is a DNA-binding region (homeobox); that stretch reads KSTSKTLHGEHATQRLLQSFKENQYPQRAVKESLAAELALSVRQVSNWFNNRRWSFRHSS.

Belongs to the PHD-associated homeobox family.

It is found in the nucleus. Specifically binds to the fungal elicitor-responsive DNA element, 5'-CTAATTGTTTA-3', of the gene PR2 promoter. The chain is Pathogenesis-related homeodomain protein (PRH) from Petroselinum crispum (Parsley).